A 99-amino-acid polypeptide reads, in one-letter code: U11-barytoxin-Tl1a (99 aa).

The first 21 residues, 1-21 (MKTLVLVAVLGLASLYLLSYA), serve as a signal peptide directing secretion. Residues 22–50 (SEVQQISRDEEDFRALMASFGGIFDTEER) constitute a propeptide that is removed on maturation. Disulfide bonds link cysteine 57–cysteine 71, cysteine 64–cysteine 76, and cysteine 70–cysteine 90.

The protein belongs to the neurotoxin 10 (Hwtx-1) family. 25 (ICK4) subfamily. Expressed by the venom gland.

The protein localises to the secreted. Its function is as follows. Ion channel inhibitor. The sequence is that of U11-barytoxin-Tl1a from Trittame loki (Brush-footed trapdoor spider).